Reading from the N-terminus, the 237-residue chain is Carbonyl reductase family member 4 (237 aa).

NADP(+) is bound by residues 11–14 (SRGI), 34–35 (RN), Asp-57, and 84–86 (AAG). A substrate-binding site is contributed by Ser-135. Residues Tyr-148, Lys-152, and 181-183 (IHT) contribute to the NADP(+) site. The active-site Proton acceptor is the Tyr-148.

Belongs to the short-chain dehydrogenases/reductases (SDR) family. As to quaternary structure, homotetramer (in vitro). Heterotetramer with HSD17B8; contains two molecules each of HSD17B8 and CBR4.

Its subcellular location is the mitochondrion matrix. It participates in lipid metabolism; fatty acid biosynthesis. Its function is as follows. The heterotetramer with HSD17B8 has NADH-dependent 3-ketoacyl-acyl carrier protein reductase activity, and thereby plays a role in mitochondrial fatty acid biosynthesis. Within the heterotetramer, HSD17B8 binds NADH; CBR4 binds NADPD. The homotetramer has NADPH-dependent quinone reductase activity. Both homotetramer and the heterotetramer have broad in vitro substrate specificity and can reduce 9,10-phenanthrenequinone, 1,4-benzoquinone and various other o-quinones and p-quinones. The chain is Carbonyl reductase family member 4 (cbr4) from Danio rerio (Zebrafish).